A 143-amino-acid chain; its full sequence is Hemoglobin-1 (143 aa).

At Ser2 the chain carries N-acetylserine. A Globin domain is found at 2–143 (SLSAAQKDNV…ALMGMIRPNM (142 aa)). Heme b is bound at residue His97.

This sequence belongs to the globin family. Monomer.

It localises to the cytoplasm. Functionally, serves to transport hydrogen sulfide to autotrophic bacteria. This Phacoides pectinatus (Thick lucine) protein is Hemoglobin-1.